Here is a 382-residue protein sequence, read N- to C-terminus: Protein NASP homolog 1 (382 aa).

The interval 1–39 (MDTENIADASDIRVKDASGDSDEKGNGTTTEEETVEQKE) is disordered. Residues 10–25 (SDIRVKDASGDSDEKG) are compositionally biased toward basic and acidic residues. Residues 42-75 (LAELLAAGRRALKVNDIDKASDSLSEATELSSEI) form a TPR 1 repeat. The span at 103-112 (QLLKGPGEKE) shows a compositional bias: basic and acidic residues. Residues 103 to 151 (QLLKGPGEKESGDEEQAGNSDDKTDEENGETEKEDGEESGEEEDDDDDT) form a disordered region. Residues 125 to 150 (KTDEENGETEKEDGEESGEEEDDDDD) are compositionally biased toward acidic residues. 2 TPR repeats span residues 191 to 224 (ADVLVLLGEHGISDGKYTQAFEDLDRALNIQRNV) and 233 to 266 (AQTYILIGNACASDANYDETVQYFGKTKDVLIAR). Positions 264–304 (IARQTELKHELERGVDDKEKKSEFENELKELEEMMPGVEEM) form a coiled coil. The segment at 337 to 382 (PQEAGDQKEANDISSLVRRPAKRAVDAPTDNQAVKKEKEEEGTTSI) is disordered. Over residues 369-382 (AVKKEKEEEGTTSI) the composition is skewed to basic and acidic residues.

Belongs to the NASP family. As to quaternary structure, may interact with zinc finger protein tra-4 and histone deacetylase hda-1.

The protein resides in the nucleus. In terms of biological role, promotes normal hermaphrodite (XX) development, in concert with zinc finger protein tra-4 and histone deacetylase hda-1, perhaps as components of a complex. May act redundantly with nasp-2. Involved in innate immune response to B.thuringiensis strain DB27 and S.aureus bacteria. May play a role in the uptake or spreading of dsRNA. This is Protein NASP homolog 1 from Caenorhabditis elegans.